The sequence spans 117 residues: Large ribosomal subunit protein bL20 (117 aa).

It belongs to the bacterial ribosomal protein bL20 family.

Functionally, binds directly to 23S ribosomal RNA and is necessary for the in vitro assembly process of the 50S ribosomal subunit. It is not involved in the protein synthesizing functions of that subunit. In Rickettsia prowazekii (strain Madrid E), this protein is Large ribosomal subunit protein bL20 (rplT).